The sequence spans 387 residues: MENVVIIDAVRTPMGRSKGGAFRQVRAEDLSAHLMREVLSRNPELNAAEIDDIYWGCVQQTLEQGFNIARNASLLAEIPHSVPAVTVNRLCGSSMQALHDGARAIMVGDAQVSLIGGVEHMGHVPMNHGVDFHPGMGRTVAKAAGMMGLTAEMLAKIHNISRQSQDEFAVRSHQRAYAATQADHFAKEIVATNGHDADGILKRFDFDEVIRPETNLAGLAALRPAFDPVNGTVTAGTSSALSDGASAMLIMSESRAKSLGLTPRARIRSMAVVGCDPSIMGYGPVPASQLALKRAGLKLEDIGLFELNEAFAAQSLACLKGLGLLESMDDKVNLNGGAIALGHPLGCSGARISTTLLNLMERRDVQFGLATMCIGLGQGIATIFERV.

Residue Cys91 is the Acyl-thioester intermediate of the active site. Active-site proton acceptor residues include His343 and Cys373.

It belongs to the thiolase-like superfamily. Thiolase family. As to quaternary structure, heterotetramer of two alpha chains (FadB) and two beta chains (FadA).

The protein resides in the cytoplasm. It catalyses the reaction an acyl-CoA + acetyl-CoA = a 3-oxoacyl-CoA + CoA. The protein operates within lipid metabolism; fatty acid beta-oxidation. Functionally, catalyzes the final step of fatty acid oxidation in which acetyl-CoA is released and the CoA ester of a fatty acid two carbons shorter is formed. This chain is 3-ketoacyl-CoA thiolase, found in Yersinia enterocolitica serotype O:8 / biotype 1B (strain NCTC 13174 / 8081).